An 883-amino-acid polypeptide reads, in one-letter code: DNA mismatch repair protein MutS (883 aa).

An ATP-binding site is contributed by 619-626; that stretch reads GPNMGGKS.

It belongs to the DNA mismatch repair MutS family.

Functionally, this protein is involved in the repair of mismatches in DNA. It is possible that it carries out the mismatch recognition step. This protein has a weak ATPase activity. This chain is DNA mismatch repair protein MutS, found in Marinomonas sp. (strain MWYL1).